The chain runs to 365 residues: Phosphate acyltransferase (365 aa).

The protein belongs to the PlsX family. Homodimer. Probably interacts with PlsY.

It localises to the cytoplasm. The catalysed reaction is a fatty acyl-[ACP] + phosphate = an acyl phosphate + holo-[ACP]. It participates in lipid metabolism; phospholipid metabolism. Catalyzes the reversible formation of acyl-phosphate (acyl-PO(4)) from acyl-[acyl-carrier-protein] (acyl-ACP). This enzyme utilizes acyl-ACP as fatty acyl donor, but not acyl-CoA. This chain is Phosphate acyltransferase, found in Klebsiella pneumoniae subsp. pneumoniae (strain ATCC 700721 / MGH 78578).